Reading from the N-terminus, the 357-residue chain is UDP-3-O-acylglucosamine N-acyltransferase (357 aa).

His258 functions as the Proton acceptor in the catalytic mechanism.

Belongs to the transferase hexapeptide repeat family. LpxD subfamily. Homotrimer.

The enzyme catalyses a UDP-3-O-[(3R)-3-hydroxyacyl]-alpha-D-glucosamine + a (3R)-hydroxyacyl-[ACP] = a UDP-2-N,3-O-bis[(3R)-3-hydroxyacyl]-alpha-D-glucosamine + holo-[ACP] + H(+). It functions in the pathway bacterial outer membrane biogenesis; LPS lipid A biosynthesis. Catalyzes the N-acylation of UDP-3-O-acylglucosamine using 3-hydroxyacyl-ACP as the acyl donor. Is involved in the biosynthesis of lipid A, a phosphorylated glycolipid that anchors the lipopolysaccharide to the outer membrane of the cell. This is UDP-3-O-acylglucosamine N-acyltransferase from Azorhizobium caulinodans (strain ATCC 43989 / DSM 5975 / JCM 20966 / LMG 6465 / NBRC 14845 / NCIMB 13405 / ORS 571).